The primary structure comprises 950 residues: Protocadherin alpha-13 (950 aa).

A signal peptide spans 1–29; sequence MLSSWQGGPRPRQLLLWLLILAAWETGSG. Topologically, residues 30-697 are extracellular; the sequence is QLHYSVPEEA…GPEAALVDVN (668 aa). Cadherin domains are found at residues 34–133, 134–242, 243–350, 351–455, 456–565, and 581–678; these read SVPE…PPIF, PESK…APEF, YQSV…APEV, TITS…APAF, AQPE…APAL, and MPRS…APQA. N-linked (GlcNAc...) asparagine glycosylation is found at Asn257 and Asn265. An N-linked (GlcNAc...) asparagine glycan is attached at Asn548. Residues 698 to 718 form a helical membrane-spanning segment; sequence VYLIIAICAVSSLLVLTLLLY. Residues 719-950 lie on the Cytoplasmic side of the membrane; sequence TALRCSAPPT…GNSTTDNSDQ (232 aa). 6 PXXP repeats span residues 734-737, 774-777, 799-802, 832-835, 873-876, and 891-894; these read PGKP, PSLP, PRQP, PGGP, PGNP, and PGSP. Residues 734 to 894 form a 6 X 4 AA repeats of P-X-X-P region; that stretch reads PGKPTLVCSS…PDKFIIPGSP (161 aa). Disordered regions lie at residues 774–808 and 827–950; these read PSLP…DWRY and ILRA…NSDQ. Basic and acidic residues predominate over residues 787–800; sequence GQREEDSEGLKEPR. The span at 909-923 shows a compositional bias: basic and acidic residues; that stretch reads DKSDFITFGKKEETK.

It is found in the cell membrane. Potential calcium-dependent cell-adhesion protein. May be involved in the establishment and maintenance of specific neuronal connections in the brain. The polypeptide is Protocadherin alpha-13 (PCDHA13) (Pan troglodytes (Chimpanzee)).